We begin with the raw amino-acid sequence, 245 residues long: Biosynthetic peptidoglycan transglycosylase (245 aa).

A helical transmembrane segment spans residues 10-30 (FLALLFVVATLAQLWYLGQVL). The interval 224–245 (DPGTVPLPPPPEPTAPPEGNTQ) is disordered. Residues 226–239 (GTVPLPPPPEPTAP) show a composition bias toward pro residues.

Belongs to the glycosyltransferase 51 family.

It is found in the cell inner membrane. It catalyses the reaction [GlcNAc-(1-&gt;4)-Mur2Ac(oyl-L-Ala-gamma-D-Glu-L-Lys-D-Ala-D-Ala)](n)-di-trans,octa-cis-undecaprenyl diphosphate + beta-D-GlcNAc-(1-&gt;4)-Mur2Ac(oyl-L-Ala-gamma-D-Glu-L-Lys-D-Ala-D-Ala)-di-trans,octa-cis-undecaprenyl diphosphate = [GlcNAc-(1-&gt;4)-Mur2Ac(oyl-L-Ala-gamma-D-Glu-L-Lys-D-Ala-D-Ala)](n+1)-di-trans,octa-cis-undecaprenyl diphosphate + di-trans,octa-cis-undecaprenyl diphosphate + H(+). It participates in cell wall biogenesis; peptidoglycan biosynthesis. Functionally, peptidoglycan polymerase that catalyzes glycan chain elongation from lipid-linked precursors. The sequence is that of Biosynthetic peptidoglycan transglycosylase from Alcanivorax borkumensis (strain ATCC 700651 / DSM 11573 / NCIMB 13689 / SK2).